Consider the following 182-residue polypeptide: ATP synthase subunit delta (182 aa).

It belongs to the ATPase delta chain family. As to quaternary structure, F-type ATPases have 2 components, F(1) - the catalytic core - and F(0) - the membrane proton channel. F(1) has five subunits: alpha(3), beta(3), gamma(1), delta(1), epsilon(1). F(0) has three main subunits: a(1), b(2) and c(10-14). The alpha and beta chains form an alternating ring which encloses part of the gamma chain. F(1) is attached to F(0) by a central stalk formed by the gamma and epsilon chains, while a peripheral stalk is formed by the delta and b chains.

Its subcellular location is the cell membrane. F(1)F(0) ATP synthase produces ATP from ADP in the presence of a proton or sodium gradient. F-type ATPases consist of two structural domains, F(1) containing the extramembraneous catalytic core and F(0) containing the membrane proton channel, linked together by a central stalk and a peripheral stalk. During catalysis, ATP synthesis in the catalytic domain of F(1) is coupled via a rotary mechanism of the central stalk subunits to proton translocation. In terms of biological role, this protein is part of the stalk that links CF(0) to CF(1). It either transmits conformational changes from CF(0) to CF(1) or is implicated in proton conduction. In Lactobacillus gasseri (strain ATCC 33323 / DSM 20243 / BCRC 14619 / CIP 102991 / JCM 1131 / KCTC 3163 / NCIMB 11718 / NCTC 13722 / AM63), this protein is ATP synthase subunit delta.